Reading from the N-terminus, the 236-residue chain is MEGLQRCFVLHYRPYSETSLILDVFSEDYGRLTILSKGARRKRSNLKGTLQPFTPLFMKWTGRGSMKTLTHAEPISISLPMRGYILYSAFYLNEVLVRVLENDTPYPVLFMDYLNALRELAQADNPEPALRRFELALLHHLGYGIDFLHCAGSGLPIDDLMTYHYREQKGFIASMMTGHFTFTGNQLLAIAARRFETPDQLKAAKRFTRIALKPYLGGKPLKSRELFIPRTRNIGK.

This sequence belongs to the RecO family.

Involved in DNA repair and RecF pathway recombination. The polypeptide is DNA repair protein RecO (Photobacterium profundum (strain SS9)).